A 614-amino-acid chain; its full sequence is NEDD8 ultimate buster 1 (614 aa).

Coiled coils occupy residues 36 to 71 (LAVK…IERG) and 151 to 206 (NVKA…MVVD). UBA domains lie at 373-413 (YIDP…ISNR), 423-469 (EEKE…LLSN), and 488-528 (SPSQ…LAHH). The short motif at 413-430 (RREELAQIRKEEKEKRRR) is the Nuclear localization signal element. The segment at 426-473 (EKRRRRLENVNTLRGMGYSTQAAKQALHQARGNLDDALKVLLSNPHMW) is NEDD8-binding 1. Positions 531–590 (SLPPDLQFSGEDSSPTPSTSPSDSAGTSSASTDEDMETEAVNEILEDIPEHEEDYLDSTL) are disordered. Over residues 539-561 (SGEDSSPTPSTSPSDSAGTSSAS) the composition is skewed to low complexity. Residues 549–597 (TSPSDSAGTSSASTDEDMETEAVNEILEDIPEHEEDYLDSTLEDEEVII) are NEDD8-binding 2. The span at 562 to 590 (TDEDMETEAVNEILEDIPEHEEDYLDSTL) shows a compositional bias: acidic residues.

In terms of assembly, directly interacts with NEDD8 and PSMD4/S5a, a member of the regulatory subunit of the 26S proteasome. Interacts with AIPL1. The interaction with UBD via UBA domains facilitates the linking of UBD-conjugated target protein to the proteasome complex and accelerates UBD degradation and that of its conjugates.

Its subcellular location is the nucleus. In terms of biological role, specific down-regulator of the NEDD8 conjugation system. Recruits NEDD8, UBD, and their conjugates to the proteasome for degradation. This is NEDD8 ultimate buster 1 (Nub1) from Mus musculus (Mouse).